The following is a 56-amino-acid chain: Small ribosomal subunit protein uS14 (56 aa).

4 residues coordinate Zn(2+): Cys21, Cys24, Cys39, and Cys42.

This sequence belongs to the universal ribosomal protein uS14 family. As to quaternary structure, component of the small ribosomal subunit. Mature ribosomes consist of a small (40S) and a large (60S) subunit. The 40S subunit contains about 32 different proteins and 1 molecule of RNA (18S). The 60S subunit contains 45 different proteins and 3 molecules of RNA (25S, 5.8S and 5S). Zn(2+) serves as cofactor.

Its subcellular location is the cytoplasm. Component of the ribosome, a large ribonucleoprotein complex responsible for the synthesis of proteins in the cell. The small ribosomal subunit (SSU) binds messenger RNAs (mRNAs) and translates the encoded message by selecting cognate aminoacyl-transfer RNA (tRNA) molecules. The large subunit (LSU) contains the ribosomal catalytic site termed the peptidyl transferase center (PTC), which catalyzes the formation of peptide bonds, thereby polymerizing the amino acids delivered by tRNAs into a polypeptide chain. The nascent polypeptides leave the ribosome through a tunnel in the LSU and interact with protein factors that function in enzymatic processing, targeting, and the membrane insertion of nascent chains at the exit of the ribosomal tunnel. This chain is Small ribosomal subunit protein uS14, found in Candida albicans (strain SC5314 / ATCC MYA-2876) (Yeast).